The sequence spans 336 residues: DNA-directed RNA polymerase subunit alpha (336 aa).

Residues 1–232 (MIQKNWQELI…DQLGVFVNFD (232 aa)) form an alpha N-terminal domain (alpha-NTD) region. The tract at residues 248–336 (FNPALLKKVD…DLAKRYEDQY (89 aa)) is alpha C-terminal domain (alpha-CTD).

Belongs to the RNA polymerase alpha chain family. As to quaternary structure, homodimer. The RNAP catalytic core consists of 2 alpha, 1 beta, 1 beta' and 1 omega subunit. When a sigma factor is associated with the core the holoenzyme is formed, which can initiate transcription.

It carries out the reaction RNA(n) + a ribonucleoside 5'-triphosphate = RNA(n+1) + diphosphate. In terms of biological role, DNA-dependent RNA polymerase catalyzes the transcription of DNA into RNA using the four ribonucleoside triphosphates as substrates. This chain is DNA-directed RNA polymerase subunit alpha, found in Rhizobium radiobacter (Agrobacterium tumefaciens).